Here is a 358-residue protein sequence, read N- to C-terminus: Protein RecA (358 aa).

69–76 (GPESSGKT) is a binding site for ATP.

It belongs to the RecA family.

The protein localises to the cytoplasm. Its function is as follows. Can catalyze the hydrolysis of ATP in the presence of single-stranded DNA, the ATP-dependent uptake of single-stranded DNA by duplex DNA, and the ATP-dependent hybridization of homologous single-stranded DNAs. It interacts with LexA causing its activation and leading to its autocatalytic cleavage. This Trichormus variabilis (strain ATCC 29413 / PCC 7937) (Anabaena variabilis) protein is Protein RecA.